Here is a 216-residue protein sequence, read N- to C-terminus: Ribosome maturation factor RimP (216 aa).

It belongs to the RimP family.

The protein resides in the cytoplasm. Functionally, required for maturation of 30S ribosomal subunits. The chain is Ribosome maturation factor RimP from Bartonella henselae (strain ATCC 49882 / DSM 28221 / CCUG 30454 / Houston 1) (Rochalimaea henselae).